Reading from the N-terminus, the 151-residue chain is Large ribosomal subunit protein bL9 (151 aa).

The protein belongs to the bacterial ribosomal protein bL9 family.

Binds to the 23S rRNA. This Dehalococcoides mccartyi (strain ATCC BAA-2266 / KCTC 15142 / 195) (Dehalococcoides ethenogenes (strain 195)) protein is Large ribosomal subunit protein bL9.